The sequence spans 276 residues: Large ribosomal subunit protein uL2 (276 aa).

The interval tryptophan 213–threonine 264 is disordered.

It belongs to the universal ribosomal protein uL2 family. Part of the 50S ribosomal subunit. Forms a bridge to the 30S subunit in the 70S ribosome.

Its function is as follows. One of the primary rRNA binding proteins. Required for association of the 30S and 50S subunits to form the 70S ribosome, for tRNA binding and peptide bond formation. It has been suggested to have peptidyltransferase activity; this is somewhat controversial. Makes several contacts with the 16S rRNA in the 70S ribosome. The chain is Large ribosomal subunit protein uL2 from Granulibacter bethesdensis (strain ATCC BAA-1260 / CGDNIH1).